Reading from the N-terminus, the 247-residue chain is tRNA pseudouridine synthase A (247 aa).

D53 acts as the Nucleophile in catalysis. Y111 is a substrate binding site.

This sequence belongs to the tRNA pseudouridine synthase TruA family. As to quaternary structure, homodimer.

The enzyme catalyses uridine(38/39/40) in tRNA = pseudouridine(38/39/40) in tRNA. In terms of biological role, formation of pseudouridine at positions 38, 39 and 40 in the anticodon stem and loop of transfer RNAs. This Bacillus velezensis (strain DSM 23117 / BGSC 10A6 / LMG 26770 / FZB42) (Bacillus amyloliquefaciens subsp. plantarum) protein is tRNA pseudouridine synthase A.